The following is a 674-amino-acid chain: UvrABC system protein B (674 aa).

A Helicase ATP-binding domain is found at 26-414 (EGLDSGLAHQ…SGNDIAEQVV (389 aa)). Residue 39–46 (GVTGSGKT) coordinates ATP. The short motif at 92-115 (YYDYYQPEAYVPTTDTFIEKDASV) is the Beta-hairpin element. The Helicase C-terminal domain maps to 432–586 (QVDDLLSEIR…ALHNKKNGIT (155 aa)). Residues 634–669 (ELEIQRLETEMYDLAQNLEFEKAAEARDKIHTLRQQ) form the UVR domain.

It belongs to the UvrB family. Forms a heterotetramer with UvrA during the search for lesions. Interacts with UvrC in an incision complex.

It is found in the cytoplasm. Functionally, the UvrABC repair system catalyzes the recognition and processing of DNA lesions. A damage recognition complex composed of 2 UvrA and 2 UvrB subunits scans DNA for abnormalities. Upon binding of the UvrA(2)B(2) complex to a putative damaged site, the DNA wraps around one UvrB monomer. DNA wrap is dependent on ATP binding by UvrB and probably causes local melting of the DNA helix, facilitating insertion of UvrB beta-hairpin between the DNA strands. Then UvrB probes one DNA strand for the presence of a lesion. If a lesion is found the UvrA subunits dissociate and the UvrB-DNA preincision complex is formed. This complex is subsequently bound by UvrC and the second UvrB is released. If no lesion is found, the DNA wraps around the other UvrB subunit that will check the other stand for damage. The polypeptide is UvrABC system protein B (Photobacterium profundum (strain SS9)).